The sequence spans 289 residues: CRISPR system Cms protein Csm4 (289 aa).

This sequence belongs to the CRISPR-associated Csm4 family. As to quaternary structure, probably part of the Csm effector complex, that includes Cas10, Csm2, Csm3, Csm4, Csm5 and mature crRNA. Interacts with Cas10 (csm1).

Functionally, CRISPR (clustered regularly interspaced short palindromic repeat) is an adaptive immune system that provides protection against mobile genetic elements (viruses, transposable elements and conjugative plasmids). CRISPR clusters contain spacers, sequences complementary to antecedent mobile elements, and target invading nucleic acids. CRISPR clusters are transcribed and processed into CRISPR RNA (crRNA). The type III-A Csm effector complex binds crRNA and acts as a crRNA-guided RNase, DNase and cyclic oligoadenylate synthase; binding of target RNA cognate to the crRNA is required for all activities. In terms of biological role, the subunit probably binds to the 5' handle of the crRNA, helping in discrimination between self- and non-self. This chain is CRISPR system Cms protein Csm4, found in Thermococcus onnurineus (strain NA1).